Consider the following 3412-residue polypeptide: Genome polyprotein (3412 aa).

A disordered region spans residues 1–30 (MAGKAILKGKGGGPPRRVSKETAKKTRQSR). Topologically, residues 1-98 (MAGKAILKGK…LQRRGKRRSA (98 aa)) are cytoplasmic. A propeptide spans 97 to 117 (SAVDWTGWLLVVVLLGVTLAA) (ER anchor for the capsid protein C, removed in mature form by serine protease NS3). Residues 99-119 (VDWTGWLLVVVLLGVTLAATV) form a helical membrane-spanning segment. At 120-242 (RKERDGTTVI…HLTRVEGWVW (123 aa)) the chain is on the extracellular side. N-linked (GlcNAc...) asparagine; by host glycosylation is present at Asn-144. A helical transmembrane segment spans residues 243 to 260 (KNKVLTLAVIAVVWLTVE). Ser-261 is a topological domain (cytoplasmic). Residues 262-280 (VVTRVAVVVVLLCLAPVYA) form a helical membrane-spanning segment. Topologically, residues 281–727 (SRCTHLENRD…HTVLGGAFNS (447 aa)) are extracellular. Disulfide bonds link Cys-283–Cys-310, Cys-340–Cys-396, Cys-340–Cys-401, Cys-354–Cys-385, Cys-372–Cys-396, and Cys-372–Cys-401. Residues 378–391 (DRGWGNHCGLFGKG) form a fusion peptide region. Residue Asn-434 is glycosylated (N-linked (GlcNAc...) asparagine; by host). 2 disulfide bridges follow: Cys-466/Cys-570 and Cys-587/Cys-618. Residues 728 to 748 (LFGGVGFLPKILVGVVLAWLG) traverse the membrane as a helical segment. The Cytoplasmic portion of the chain corresponds to 749 to 755 (LNMRNPT). A helical transmembrane segment spans residues 756–776 (MSMSFLLAGGLVLAMTLGVGA). The Extracellular portion of the chain corresponds to 777 to 1187 (DVGCAVDTER…LVKIESLVRY (411 aa)). Disulfide bonds link Cys-780/Cys-791, Cys-831/Cys-920, Cys-955/Cys-1000, Cys-1057/Cys-1106, Cys-1068/Cys-1090, and Cys-1089/Cys-1093. 3 N-linked (GlcNAc...) asparagine; by host glycosylation sites follow: Asn-861, Asn-983, and Asn-999. Residues 1188–1208 (VVAVGITFHLELGPEIVALTL) traverse the membrane as a helical segment. Residues 1209–1236 (LQAVFELRVGLLSAFALRSNLTVREMVT) are Cytoplasmic-facing. A helical transmembrane segment spans residues 1237–1257 (IYFLLLVLELGLPSEGLGALW). Residues 1258–1293 (KWGDALAMGALIFRACTAEEKTGVGLLLMALMTQQD) lie on the Lumenal side of the membrane. Residues 1294 to 1314 (LATVHYGLMLFLGVASCCSIW) form a helical membrane-spanning segment. At 1315-1327 (KLIRGHREQKGLT) the chain is on the cytoplasmic side. The helical transmembrane segment at 1328–1348 (WIVPLAGLLGGEGSGVRLVAF) threads the bilayer. At 1349–1359 (WELTVHGRRRS) the chain is on the cytoplasmic side. A helical membrane pass occupies residues 1360-1378 (FSEPLTVVGVMLTLASGMI). Over 1379–1382 (RHTS) the chain is Lumenal. The helical transmembrane segment at 1383–1403 (QEALCALAVASFLLLMLVLGT) threads the bilayer. Over 1404 to 1454 (RKMQLVAEWSGCVEWHPELMNEGGEVSLRVRQDSMGNFHLTELEKEERVMA) the chain is Cytoplasmic. Residues 1410–1449 (AEWSGCVEWHPELMNEGGEVSLRVRQDSMGNFHLTELEKE) form an interacts with and activates NS3 protease region. The segment at residues 1455 to 1475 (FWLLAGLAASAFHWSGILGVM) is an intramembrane region (helical). At 1476 to 2160 (GLWTLSEMLR…KMAERDAPEA (685 aa)) the chain is on the cytoplasmic side. A Peptidase S7 domain is found at 1490-1669 (SGLVFSGQGG…EAEKSRPNLP (180 aa)). Active-site charge relay system; for serine protease NS3 activity residues include His-1543, Asp-1567, and Ser-1627. The region spanning 1675-1831 (TGWTAKGQIT…ESNGAISSEE (157 aa)) is the Helicase ATP-binding domain. 1688-1695 (MHPGSGKT) provides a ligand contact to ATP. The short motif at 1779–1782 (DEAH) is the DEAH box element. In terms of domain architecture, Helicase C-terminal spans 1841–2000 (DGFDWITEYE…TLRGPVATFY (160 aa)). Lys-1883 bears the N6-acetyllysine; by host mark. The helical transmembrane segment at 2161–2181 (FLTVVEMMVLGLATLGVVWCF) threads the bilayer. Over 2182–2189 (VVRTSISR) the chain is Lumenal. The segment at residues 2190–2210 (MMLGTLVLLASLALLWAGGVS) is an intramembrane region (helical). Residue Tyr-2211 is a topological domain, lumenal. The helical transmembrane segment at 2212–2232 (GNMAGVALIFYTLLTVLQPEA) threads the bilayer. Residues 2233–2244 (GKQRSSDDNKLA) lie on the Cytoplasmic side of the membrane. Residues 2245 to 2265 (YFLLTLCSLAGLVAANEMGFL) traverse the membrane as a helical segment. At 2266 to 2299 (EKTKADLSTVLWSEHEELRSWEEWTNIDIQPARS) the chain is on the lumenal side. Residues 2300–2320 (WGTYVLVVSLFTPYIIHQLQT) constitute an intramembrane region (helical). Residues 2321–2343 (KIQQLVNSAVATGAQAMRDLGGG) lie on the Lumenal side of the membrane. The segment at residues 2344-2364 (APFFGVAGHVMALGVVSLVGA) is an intramembrane region (helical). Residues 2365–2368 (TPTS) lie on the Lumenal side of the membrane. The helical transmembrane segment at 2369-2389 (LVVGVGLAAFHLAIVVSGLEA) threads the bilayer. The Cytoplasmic portion of the chain corresponds to 2390-2430 (ELTQRAHKVFFSAMVRNPMVDGDVINPFGEGEAKPALYERK). Residues 2431–2451 (MSLVLAIVLCLMSVVMNRTVP) form a helical membrane-spanning segment. Residues 2452-2476 (STPRLLLWDWRQRDNCSNQRRTPFG) lie on the Lumenal side of the membrane. The chain crosses the membrane as a helical span at residues 2477 to 2497 (RCQACGLSGVVRGSLWGFCPL). Over 2498–3412 (GHRLWLRASG…WESKLESSII (915 aa)) the chain is Cytoplasmic. One can recognise an mRNA cap 0-1 NS5-type MT domain in the interval 2511–2775 (GGSEGDTLGD…ELDLGVGTRC (265 aa)). Ser-2566 contributes to the S-adenosyl-L-methionine binding site. Phosphoserine is present on Ser-2566. Lys-2571 (for 2'-O-MTase activity) is an active-site residue. S-adenosyl-L-methionine-binding residues include Gly-2596, Trp-2597, Ile-2615, Asp-2641, and Val-2642. The For 2'-O-MTase activity role is filled by Asp-2656. Ile-2657 is an S-adenosyl-L-methionine binding site. Active-site for 2'-O-MTase activity residues include Lys-2693 and Glu-2729. The interval 2729 to 2733 (EMYYS) is interaction with host SCRIB. An S-adenosyl-L-methionine-binding site is contributed by Tyr-2731. Zn(2+) contacts are provided by Glu-2948, His-2952, Cys-2957, and Cys-2960. Residues 3038 to 3187 (GLFYADDTAG…RPVDDRFSGA (150 aa)) enclose the RdRp catalytic domain. Zn(2+)-binding residues include His-3222, Cys-3238, and Cys-3357.

In the N-terminal section; belongs to the class I-like SAM-binding methyltransferase superfamily. mRNA cap 0-1 NS5-type methyltransferase family. Homodimer. Interacts (via N-terminus) with host EXOC1 (via C-terminus); this interaction results in EXOC1 degradation through the proteasome degradation pathway. In terms of assembly, forms heterodimers with envelope protein E in the endoplasmic reticulum and Golgi. As to quaternary structure, homodimer; in the endoplasmic reticulum and Golgi. Interacts with protein prM. Interacts with non-structural protein 1. Homodimer; Homohexamer when secreted. Interacts with envelope protein E. In terms of assembly, interacts (via N-terminus) with serine protease NS3. As to quaternary structure, forms a heterodimer with serine protease NS3. May form homooligomers. Forms a heterodimer with NS2B. Interacts with non-structural protein 2A (via N-terminus). Interacts with NS4B. Interacts with unphosphorylated RNA-directed RNA polymerase NS5; this interaction stimulates RNA-directed RNA polymerase NS5 guanylyltransferase activity. In terms of assembly, interacts with serine protease NS3. Interacts with NS1. As to quaternary structure, homodimer. Interacts with host STAT2; this interaction inhibits the phosphorylation of the latter, and, when all viral proteins are present (polyprotein), targets STAT2 for degradation. Interacts with serine protease NS3. Interacts with host SCRIB; this interaction targets NS5 to the cell membrane periphery and nucleus, thereby allowing efficient host nuclear STAT1 inhibition. Post-translationally, specific enzymatic cleavages in vivo yield mature proteins. Cleavages in the lumen of endoplasmic reticulum are performed by host signal peptidase, whereas cleavages in the cytoplasmic side are performed by serine protease NS3. Signal cleavage at the 2K-4B site requires a prior NS3 protease-mediated cleavage at the 4A-2K site. In terms of processing, cleaved in post-Golgi vesicles by a host furin, releasing the mature small envelope protein M, and peptide pr. This cleavage is incomplete as up to 30% of viral particles still carry uncleaved prM. N-glycosylated. Post-translationally, N-glycosylated. The excreted form is glycosylated and this is required for efficient secretion of the protein from infected cells. In terms of processing, acetylated by host KAT5. Acetylation modulates NS3 RNA-binding and unwinding activities and plays an important positive role for viral replication. Phosphorylated on serines residues. This phosphorylation may trigger NS5 nuclear localization.

The protein resides in the virion. Its subcellular location is the host nucleus. It is found in the host cytoplasm. The protein localises to the host perinuclear region. It localises to the secreted. The protein resides in the virion membrane. Its subcellular location is the host endoplasmic reticulum membrane. The catalysed reaction is Selective hydrolysis of -Xaa-Xaa-|-Yaa- bonds in which each of the Xaa can be either Arg or Lys and Yaa can be either Ser or Ala.. It carries out the reaction RNA(n) + a ribonucleoside 5'-triphosphate = RNA(n+1) + diphosphate. It catalyses the reaction a ribonucleoside 5'-triphosphate + H2O = a ribonucleoside 5'-diphosphate + phosphate + H(+). The enzyme catalyses ATP + H2O = ADP + phosphate + H(+). The catalysed reaction is a 5'-end (5'-triphosphoguanosine)-ribonucleoside in mRNA + S-adenosyl-L-methionine = a 5'-end (N(7)-methyl 5'-triphosphoguanosine)-ribonucleoside in mRNA + S-adenosyl-L-homocysteine. It carries out the reaction a 5'-end (N(7)-methyl 5'-triphosphoguanosine)-ribonucleoside in mRNA + S-adenosyl-L-methionine = a 5'-end (N(7)-methyl 5'-triphosphoguanosine)-(2'-O-methyl-ribonucleoside) in mRNA + S-adenosyl-L-homocysteine + H(+). Plays a role in virus budding by binding to the cell membrane and gathering the viral RNA into a nucleocapsid that forms the core of a mature virus particle. During virus entry, may induce genome penetration into the host cytoplasm after hemifusion induced by the surface proteins. Can migrate to the cell nucleus where it modulates host functions. Its function is as follows. Inhibits RNA silencing by interfering with host Dicer. Functionally, prevents premature fusion activity of envelope proteins in trans-Golgi by binding to envelope protein E at pH6.0. After virion release in extracellular space, gets dissociated from E dimers. In terms of biological role, acts as a chaperone for envelope protein E during intracellular virion assembly by masking and inactivating envelope protein E fusion peptide. prM is the only viral peptide matured by host furin in the trans-Golgi network probably to avoid catastrophic activation of the viral fusion activity in acidic Golgi compartment prior to virion release. prM-E cleavage is inefficient, and many virions are only partially matured. These uncleaved prM would play a role in immune evasion. May play a role in virus budding. Exerts cytotoxic effects by activating a mitochondrial apoptotic pathway through M ectodomain. May display a viroporin activity. Its function is as follows. Binds to host cell surface receptor and mediates fusion between viral and cellular membranes. Envelope protein is synthesized in the endoplasmic reticulum in the form of heterodimer with protein prM. They play a role in virion budding in the ER, and the newly formed immature particle is covered with 60 spikes composed of heterodimer between precursor prM and envelope protein E. The virion is transported to the Golgi apparatus where the low pH causes dissociation of PrM-E heterodimers and formation of E homodimers. prM-E cleavage is inefficient, and many virions are only partially matured. These uncleaved prM would play a role in immune evasion. Functionally, involved in immune evasion, pathogenesis and viral replication. Once cleaved off the polyprotein, is targeted to three destinations: the viral replication cycle, the plasma membrane and the extracellular compartment. Essential for viral replication. Required for formation of the replication complex and recruitment of other non-structural proteins to the ER-derived membrane structures. Excreted as a hexameric lipoparticle that plays a role against host immune response. Antagonizing the complement function. Binds to the host macrophages and dendritic cells. Inhibits signal transduction originating from Toll-like receptor 3 (TLR3). In terms of biological role, component of the viral RNA replication complex that functions in virion assembly and antagonizes the host immune response. Required cofactor for the serine protease function of NS3. May have membrane-destabilizing activity and form viroporins. Its function is as follows. Displays three enzymatic activities: serine protease, NTPase and RNA helicase. NS3 serine protease, in association with NS2B, performs its autocleavage and cleaves the polyprotein at dibasic sites in the cytoplasm: C-prM, NS2A-NS2B, NS2B-NS3, NS3-NS4A, NS4A-2K and NS4B-NS5. NS3 RNA helicase binds RNA and unwinds dsRNA in the 3' to 5' direction. Functionally, regulates the ATPase activity of the NS3 helicase activity. NS4A allows NS3 helicase to conserve energy during unwinding. In terms of biological role, functions as a signal peptide for NS4B and is required for the interferon antagonism activity of the latter. Induces the formation of ER-derived membrane vesicles where the viral replication takes place. Inhibits interferon (IFN)-induced host STAT1 phosphorylation and nuclear translocation, thereby preventing the establishment of cellular antiviral state by blocking the IFN-alpha/beta pathway. Inhibits STAT2 translocation in the nucleus after IFN-alpha treatment. Its function is as follows. Replicates the viral (+) and (-) genome, and performs the capping of genomes in the cytoplasm. NS5 methylates viral RNA cap at guanine N-7 and ribose 2'-O positions. Besides its role in RNA genome replication, also prevents the establishment of cellular antiviral state by blocking the interferon-alpha/beta (IFN-alpha/beta) signaling pathway. Inhibits host TYK2 and STAT2 phosphorylation, thereby preventing activation of JAK-STAT signaling pathway. The sequence is that of Genome polyprotein from Homo sapiens (Human).